A 104-amino-acid chain; its full sequence is MAAKIKKGDKVVVLTGRDSGRSGEVIQVLPKEGRAFVRGINLVKKHQKQTQNQEGGIISKEAAIQLSNIAVADANGKPTRVGFRILEDGRKVRFAKTTGDQIDG.

Belongs to the universal ribosomal protein uL24 family. In terms of assembly, part of the 50S ribosomal subunit.

One of two assembly initiator proteins, it binds directly to the 5'-end of the 23S rRNA, where it nucleates assembly of the 50S subunit. Its function is as follows. One of the proteins that surrounds the polypeptide exit tunnel on the outside of the subunit. This Methylobacterium radiotolerans (strain ATCC 27329 / DSM 1819 / JCM 2831 / NBRC 15690 / NCIMB 10815 / 0-1) protein is Large ribosomal subunit protein uL24.